Here is a 446-residue protein sequence, read N- to C-terminus: Probable carboxylesterase 16 (446 aa).

The segment at 84–131 (PEPDSLRHKDNYNHQPRSDRRHSYGPNHNSPAPAERNESRRNSYGCNN) is disordered. Over residues 87–105 (DSLRHKDNYNHQPRSDRRH) the composition is skewed to basic and acidic residues. Residues 158–160 (HGG) carry the Involved in the stabilization of the negatively charged intermediate by the formation of the oxyanion hole motif. Active-site residues include Ser-274, Asp-378, and His-408.

It belongs to the 'GDXG' lipolytic enzyme family. In terms of tissue distribution, expressed in roots, leaves, stems, flowers and siliques.

The enzyme catalyses a carboxylic ester + H2O = an alcohol + a carboxylate + H(+). In terms of biological role, carboxylesterase acting on esters with varying acyl chain length. The sequence is that of Probable carboxylesterase 16 (CXE16) from Arabidopsis thaliana (Mouse-ear cress).